Consider the following 426-residue polypeptide: Gamma-glutamyl phosphate reductase (426 aa).

This sequence belongs to the gamma-glutamyl phosphate reductase family.

The protein localises to the cytoplasm. The catalysed reaction is L-glutamate 5-semialdehyde + phosphate + NADP(+) = L-glutamyl 5-phosphate + NADPH + H(+). It participates in amino-acid biosynthesis; L-proline biosynthesis; L-glutamate 5-semialdehyde from L-glutamate: step 2/2. Functionally, catalyzes the NADPH-dependent reduction of L-glutamate 5-phosphate into L-glutamate 5-semialdehyde and phosphate. The product spontaneously undergoes cyclization to form 1-pyrroline-5-carboxylate. This Cupriavidus taiwanensis (strain DSM 17343 / BCRC 17206 / CCUG 44338 / CIP 107171 / LMG 19424 / R1) (Ralstonia taiwanensis (strain LMG 19424)) protein is Gamma-glutamyl phosphate reductase.